The following is a 443-amino-acid chain: Endoplasmic reticulum protein SC65 (443 aa).

Residues 1–18 (MARAAWGLLWLLLGSAGA) form the signal peptide. Positions 81–102 (SGPATSQPRPAPGPDGDNEGDG) are disordered. Asn-367 carries N-linked (GlcNAc...) asparagine glycosylation. Acidic residues-rich tracts occupy residues 387–398 (DEMELEETESLP), 407–419 (AEFE…EEGL), and 431–443 (GDED…PELA). Residues 387 to 443 (DEMELEETESLPEPEKPLSDAEFEGEGDYEEGLYADWWQEPDAKGDEDEAEPEPELA) are disordered.

It belongs to the leprecan family. In terms of assembly, interacts with PLOD1, P3H3 and PPIB. Identified in a complex with PLOD1 and P3H3. In terms of tissue distribution, found in testis, brain, heart and at a much lower level in liver.

The protein resides in the endoplasmic reticulum. Part of a complex composed of PLOD1, P3H3 and P3H4 that catalyzes hydroxylation of lysine residues in collagen alpha chains and is required for normal assembly and cross-linking of collagen fibrils. Required for normal bone density and normal skin stability via its role in hydroxylation of lysine residues in collagen alpha chains and in collagen fibril assembly. In Rattus norvegicus (Rat), this protein is Endoplasmic reticulum protein SC65.